Reading from the N-terminus, the 501-residue chain is Aldehyde dehydrogenase, cytosolic 1 (501 aa).

NAD(+) is bound at residue 246-251; sequence GSTEVG. The active-site Proton acceptor is E269. The Nucleophile role is filled by C303.

It belongs to the aldehyde dehydrogenase family. In terms of assembly, homotetramer. As to expression, eye specific, with very high expression in the lens.

The protein localises to the cytoplasm. It catalyses the reaction an aldehyde + NAD(+) + H2O = a carboxylate + NADH + 2 H(+). Its pathway is alcohol metabolism; ethanol degradation; acetate from ethanol: step 2/2. Functionally, major component of the eye of elephant shrews, which in contrast to other mammals, possesses both a lens- and a non-lens class-1 aldehyde dehydrogenase 1. This eye-specific form is a structural protein of the lens and, in other part of the eye, serves as the major form of ALDH1. Can convert/oxidize retinaldehyde to retinoic acid. This chain is Aldehyde dehydrogenase, cytosolic 1 (ALDH1), found in Elephantulus edwardii (Cape long-eared elephant shrew).